The sequence spans 674 residues: Slender lobes-like protein (674 aa).

3 disordered regions span residues 65-137 (LEKS…NASK), 168-321 (NELN…TIKK), and 352-382 (QKSR…RVEV). Residues 73–97 (PKKKVQTKKHLPPVRKKDSVKRRRI) show a composition bias toward basic residues. Over residues 127 to 137 (NQSNCSSNASK) the composition is skewed to polar residues. A compositionally biased stretch (acidic residues) spans 216 to 228 (VDSDDEEEQDQDQ). Over residues 233 to 245 (KPAESENHSEIKK) the composition is skewed to basic and acidic residues. The residue at position 248 (S248) is a Phosphoserine. The segment covering 272–312 (EDPKEAGKNEESDKDKPAENGKSDKDKQAETEMSDEDKPSE) has biased composition (basic and acidic residues). Phosphoserine occurs at positions 358 and 391. Disordered stretches follow at residues 395–585 (MVAE…AGYV) and 618–659 (KYFR…NSAK). Residues 400–410 (KRQKNKRKRLS) are compositionally biased toward basic residues. The residue at position 414 (S414) is a Phosphoserine. Positions 548–558 (AKQKKKGKKKQ) are enriched in basic residues.

The protein is Slender lobes-like protein of Drosophila melanogaster (Fruit fly).